An 819-amino-acid chain; its full sequence is Ent-beyerene synthase KSL2, chloroplastic (819 aa).

Residues 1–58 (MLPCLFPAYGSVVACKPSAIDRSPFGLLSQPKQTNRTLIRRPKVTKAFMAIEAMRHCS) constitute a chloroplast transit peptide. The segment covering 58–76 (SSSSSSEEGGAAATTAARS) has biased composition (low complexity). The segment at 58–77 (SSSSSSEEGGAAATTAARSA) is disordered. Residues D567, D571, N711, S715, and E719 each coordinate Mg(2+). Residues 567–571 (DDFFD) carry the DDXXD motif motif.

This sequence belongs to the terpene synthase family. Mg(2+) is required as a cofactor. Expressed in roots. Highly expressed in stems, flowers and panicle.

It localises to the plastid. It is found in the chloroplast. The enzyme catalyses ent-copalyl diphosphate = ent-beyerene + diphosphate. The catalysed reaction is ent-copalyl diphosphate = ent-kaur-16-ene + diphosphate. The protein operates within secondary metabolite biosynthesis; terpenoid biosynthesis. Diterpene cyclase involved in jasmonic acid-dependent defense mechanisms in roots by mediating the biosynthesis of labdane-related diterpenoids (LRDs) natural products such as ent-beyerene, an antimicrobial compound. Catalyzes the cyclization of ent-CDP into ent-beyerene as a major and ent-kaurene as a minor product. May be involved in the catalysis of an early step of the gibberellin (GA) biosynthesis pathway. This chain is Ent-beyerene synthase KSL2, chloroplastic, found in Oryza sativa subsp. japonica (Rice).